The following is a 753-amino-acid chain: 5-methyltetrahydropteroyltriglutamate--homocysteine methyltransferase (753 aa).

5-methyltetrahydropteroyltri-L-glutamate is bound by residues 17-20 (RELK) and lysine 117. L-homocysteine-binding positions include 431–433 (IGS) and glutamate 484. L-methionine contacts are provided by residues 431 to 433 (IGS) and glutamate 484. Residues 515–516 (RC) and tryptophan 561 contribute to the 5-methyltetrahydropteroyltri-L-glutamate site. Aspartate 599 provides a ligand contact to L-homocysteine. An L-methionine-binding site is contributed by aspartate 599. Position 605 (glutamate 605) interacts with 5-methyltetrahydropteroyltri-L-glutamate. The Zn(2+) site is built by histidine 641, cysteine 643, and glutamate 665. Residue histidine 694 is the Proton donor of the active site. Cysteine 726 contributes to the Zn(2+) binding site.

It belongs to the vitamin-B12 independent methionine synthase family. Zn(2+) is required as a cofactor.

The enzyme catalyses 5-methyltetrahydropteroyltri-L-glutamate + L-homocysteine = tetrahydropteroyltri-L-glutamate + L-methionine. It functions in the pathway amino-acid biosynthesis; L-methionine biosynthesis via de novo pathway; L-methionine from L-homocysteine (MetE route): step 1/1. Its function is as follows. Catalyzes the transfer of a methyl group from 5-methyltetrahydrofolate to homocysteine resulting in methionine formation. The chain is 5-methyltetrahydropteroyltriglutamate--homocysteine methyltransferase from Escherichia coli (strain SMS-3-5 / SECEC).